Consider the following 86-residue polypeptide: DNA-directed RNA polymerase subunit Rpo11 (86 aa).

It belongs to the archaeal Rpo11/eukaryotic RPB11/RPC19 RNA polymerase subunit family. As to quaternary structure, part of the RNA polymerase complex.

Its subcellular location is the cytoplasm. The enzyme catalyses RNA(n) + a ribonucleoside 5'-triphosphate = RNA(n+1) + diphosphate. Functionally, DNA-dependent RNA polymerase (RNAP) catalyzes the transcription of DNA into RNA using the four ribonucleoside triphosphates as substrates. The chain is DNA-directed RNA polymerase subunit Rpo11 from Archaeoglobus fulgidus (strain ATCC 49558 / DSM 4304 / JCM 9628 / NBRC 100126 / VC-16).